A 521-amino-acid chain; its full sequence is Jacalin-related lectin 38 (521 aa).

The region spanning 2 to 48 (MQPDHDLPYDLEGEILSHLPIQILARFRCVCKRWNTLFKERRFFNSD) is the F-box domain. 3 Kelch repeats span residues 145–190 (KHYK…PYSV), 326–373 (YIYI…ITQH), and 486–521 (MSFV…SPLP). One can recognise a Jacalin-type lectin domain in the interval 377 to 519 (SRFAPLRGIQ…LTAFGVHFSP (143 aa)).

Belongs to the jacalin lectin family.

The sequence is that of Jacalin-related lectin 38 (JAL38) from Arabidopsis thaliana (Mouse-ear cress).